Consider the following 612-residue polypeptide: MFTFEAAKYPTASGVYLMKGEAGTVFYVGKAKNLRSRLRSYFSEHGDNRPQIRFLLKRVHDIETIVTDTEKEALILENTLIKKYRPRYNINLRDDKTYLSLRLDPRQEFPMLQLVRRVRRDGALYFGPYASSTAVRATLQEIYRIFPLRRHPWESCRSRSRPCLYYQIGQCSAPCHGKISAEDYQRLVDGALALLAGRESEVVESLQHQMAAAAERMAFEEAARLRDQLRAIEQTVERQKVVEAGGGDQDVVGLHREGGEVELAILFVREGKVIDRRSYNLEWRLDEEELLSTFLQRFYGRDVCIPDRVLLPFLPEGSEVLAEWLSEQRGKKVQVLAPLRGTRRKLVALAARNAEESFRERGSRREARQGVLEEIARRLHLTRFPHRIECFDISNVQGRFSVGSMAVLSDGEPDKGAYRHFRIRSVEGSDDYASLYEVLRRRLERGLREESLPDFILMDGGKGQLNIVCTVLDELNLTGRIDVAGIAKSRVMANVRGKAVERSEERFFLPGRKNSVNLRQGSPALFMLERLRDEAHRFAITHHRKLRRRSTLGSVLEEIPGVGEKRRKALLKHFGSLKAVQAASLDELRAMPGLPAALAERIHAAFQERKTS.

The GIY-YIG domain maps to 11–90; sequence TASGVYLMKG…IKKYRPRYNI (80 aa). The region spanning 200-235 is the UVR domain; it reads SEVVESLQHQMAAAAERMAFEEAARLRDQLRAIEQT.

It belongs to the UvrC family. Interacts with UvrB in an incision complex.

Its subcellular location is the cytoplasm. Its function is as follows. The UvrABC repair system catalyzes the recognition and processing of DNA lesions. UvrC both incises the 5' and 3' sides of the lesion. The N-terminal half is responsible for the 3' incision and the C-terminal half is responsible for the 5' incision. The sequence is that of UvrABC system protein C from Syntrophotalea carbinolica (strain DSM 2380 / NBRC 103641 / GraBd1) (Pelobacter carbinolicus).